We begin with the raw amino-acid sequence, 895 residues long: Iron-regulated surface determinant protein H (895 aa).

Residues 1–40 (MNKHHPKLRSFYSIRKSILGVASVIVSTLFLITSQHQAQA) form the signal peptide. The disordered stretch occupies residues 42–84 (ENTNTSDKISENQNNNATTTQPPKDTNQTQPATQPANTAKTYP). The span at 53 to 62 (NQNNNATTTQ) shows a compositional bias: low complexity. Polar residues predominate over residues 63–81 (PPKDTNQTQPATQPANTAK). Residues 105–232 (DIGPREQVNF…IYNDPSLVKS (128 aa)) enclose the NEAT 1 domain. The disordered stretch occupies residues 239-324 (VTNDQSSSDA…NQSDVNQQYP (86 aa)). Positions 240-276 (TNDQSSSDASNQTNTNTSNQNTSTINNANNQPQATTN) are enriched in low complexity. The segment covering 277 to 323 (MSQPAQPKSSANADQASSQPAHETNSNGNTNDKTNESSNQSDVNQQY) has biased composition (polar residues). 2 consecutive NEAT domains span residues 345–471 (TADN…DYVD) and 543–660 (QLTD…TKDD). Disordered stretches follow at residues 657–705 (TKDD…KADV), 752–782 (IAKDTDRNVDKGADNSVGMSSNVDTDKDSNK), and 841–868 (KTKEKAGTPSKENKLSQSKMLPKTGETT). Composition is skewed to polar residues over residues 663–677 (SQNNTSEPLNVQTGQ) and 687–697 (AENSSTATNPK). Basic and acidic residues-rich tracts occupy residues 752–764 (IAKDTDRNVDKGA) and 841–854 (KTKEKAGTPSKENK). Over residues 855–868 (LSQSKMLPKTGETT) the composition is skewed to polar residues. The LPXTG sorting signal signature appears at 861 to 865 (LPKTG). Position 864 is a pentaglycyl murein peptidoglycan amidated threonine (Thr-864). A propeptide spans 865–895 (GETTSSQSWWGLYALLGMLALFIPKFRKESK) (removed by sortase).

Belongs to the IsdH family.

It localises to the secreted. Its subcellular location is the cell wall. Its function is as follows. Binds human plasma haptoglobin-hemoglobin complexes, haptoglobin and hemoglobin. Binds haptoglobin-hemoglobin complexes with significantly higher affinity than haptoglobin alone. The chain is Iron-regulated surface determinant protein H (isdH) from Staphylococcus aureus (strain MSSA476).